We begin with the raw amino-acid sequence, 470 residues long: Fumarate hydratase class II (470 aa).

Residues 99 to 101 (SGT), 129 to 132 (HPND), 139 to 141 (SSN), and Thr-187 contribute to the substrate site. The Proton donor/acceptor role is filled by His-188. Residue Ser-318 is part of the active site. Substrate contacts are provided by residues Ser-319 and 324 to 326 (KIN).

Belongs to the class-II fumarase/aspartase family. Fumarase subfamily. In terms of assembly, homotetramer.

It is found in the cytoplasm. It catalyses the reaction (S)-malate = fumarate + H2O. It participates in carbohydrate metabolism; tricarboxylic acid cycle; (S)-malate from fumarate: step 1/1. In terms of biological role, involved in the TCA cycle. Catalyzes the stereospecific interconversion of fumarate to L-malate. In Halobacterium salinarum (strain ATCC 700922 / JCM 11081 / NRC-1) (Halobacterium halobium), this protein is Fumarate hydratase class II.